Reading from the N-terminus, the 1482-residue chain is Cystic fibrosis transmembrane conductance regulator (1482 aa).

At 1-77 (MQRSPLEKAS…KLINALRRCF (77 aa)) the chain is on the cytoplasmic side. A helical transmembrane segment spans residues 78-98 (FWRFMFYGILLYLGEVTKAVQ). The region spanning 81–365 (FMFYGILLYL…WAVQTWYDSL (285 aa)) is the ABC transmembrane type-1 1 domain. At 99 to 122 (PLLLGRIIASYDPDNKVERSIAIY) the chain is on the extracellular side. Residues 123-146 (LGIGLCLLFIVRTLLLHPAIFGLH) form a helical membrane-spanning segment. The Cytoplasmic segment spans residues 147-195 (HIGMQMRIAMFSLIYKKILKLSSRVLDKISIGQLVSLLSNNLNKFDEGL). Residues 196-216 (ALAHFVWIAPLQVTLLMGLLW) form a helical membrane-spanning segment. The Extracellular portion of the chain corresponds to 217–222 (ELLQAS). A helical transmembrane segment spans residues 223 to 243 (AFCGLGFLIVLALVQAGLGRM). Residues 244 to 298 (MMKYRDQRAGKINERLVITSEMIENIQSVKAYCWEEAMEKMIENLRQTELKLTRK) are Cytoplasmic-facing. Residues 299-319 (AAYVRYFNSSAFFFSGFFVVF) form a helical membrane-spanning segment. The Extracellular portion of the chain corresponds to 320–339 (LSVLPYALIKGIILRKIFTT). Residues 340 to 358 (ISFCIVLRMAVTRQFPWAV) traverse the membrane as a helical segment. Residues 359–859 (QTWYDSLGAI…YLRYLAVNKS (501 aa)) lie on the Cytoplasmic side of the membrane. Residues Trp401, 458 to 465 (GSTGAGKT), and Gln493 each bind ATP. Residues 423–646 (NGDNSLFFSN…RPDFSSKLMG (224 aa)) enclose the ABC transporter 1 domain. Residue Cys524 is the site of S-palmitoyl cysteine attachment. Residues Ser549 and Ser660 each carry the phosphoserine modification. The interval 654 to 832 (SAERRNSILT…EEINEEYLKE (179 aa)) is disordered R region. Residue Ser670 is modified to Phosphoserine; by PKA. At Ser686 the chain carries Phosphoserine. A Glycyl lysine isopeptide (Lys-Gly) (interchain with G-Cter in ubiquitin) cross-link involves residue Lys688. Phosphoserine occurs at positions 700 and 712. Thr717 is modified (phosphothreonine). Ser738, Ser769, Ser791, Ser796, and Ser814 each carry phosphoserine. The helical transmembrane segment at 860 to 880 (LSLVLIWCLVIFLAEVAISLA) threads the bilayer. An ABC transmembrane type-1 2 domain is found at 860-1156 (LSLVLIWCLV…AVNSSIDVDS (297 aa)). Residues 881-919 (VLLLLDKSPRYSKGNGTASGNGSSAVIITSTSSYYLFYI) lie on the Extracellular side of the membrane. N-linked (GlcNAc...) asparagine glycans are attached at residues Asn895 and Asn901. The chain crosses the membrane as a discontinuously helical span at residues 920-940 (YVGVADTLLALGFFRGLPLVH). Over 941 to 991 (TLITVSKILHHRMLHSVLRAPMSTLNMLKAGGILNRFSKDIAILDDLLPLT) the chain is Cytoplasmic. The helical transmembrane segment at 992 to 1012 (IFDFVQLLLIVIGAVAVVSVL) threads the bilayer. At 1013–1014 (QP) the chain is on the extracellular side. A helical membrane pass occupies residues 1015–1035 (YIFLATVPVIAAFVILRGYFL). At 1036-1096 (HTSQQLKQLE…TANWFLYLST (61 aa)) the chain is on the cytoplasmic side. A helical transmembrane segment spans residues 1097-1117 (LRWFQMRIEMIFVVFFIAVTF). Over 1118–1131 (ISILTTGEGEGTVG) the chain is Extracellular. Residues 1132-1152 (IILTLAMNIMGTLQWAVNSSI) form a helical membrane-spanning segment. The Cytoplasmic segment spans residues 1153 to 1482 (DVDSLMRSVS…TEEEVQETRL (330 aa)). The ABC transporter 2 domain maps to 1212 to 1445 (MTVKDLTARY…KSLFRQAISP (234 aa)). ATP is bound by residues Tyr1221 and 1246 to 1253 (GRTGAGKS). An interaction with GORASP2 region spans residues 1388–1482 (RTLKQAFADC…TEEEVQETRL (95 aa)). A lipid anchor (S-palmitoyl cysteine) is attached at Cys1397. Ser1446 and Ser1458 each carry phosphoserine. A disordered region spans residues 1450–1482 (KLFPRRNSSKHKSRSPITALKEETEEEVQETRL). The span at 1451-1463 (LFPRRNSSKHKSR) shows a compositional bias: basic residues. Residues 1472–1482 (ETEEEVQETRL) show a composition bias toward acidic residues. A PDZ-binding motif is present at residues 1480 to 1482 (TRL).

It belongs to the ABC transporter superfamily. ABCC family. CFTR transporter (TC 3.A.1.202) subfamily. As to quaternary structure, monomer; does not require oligomerization for channel activity. May form oligomers in the membrane. Interacts with SLC26A3, SLC26A6 and NHERF1. Interacts with SHANK2. Interacts with MYO6. Interacts (via C-terminus) with GOPC (via PDZ domain); this promotes CFTR internalization and thereby decreases channel activity. Interacts with SLC4A7 through NHERF1. Found in a complex with MYO5B and RAB11A. Interacts with ANO1. Interacts with SLC26A8. Interacts with AHCYL1; the interaction increases CFTR activity. Interacts with CSE1L. The core-glycosylated form interacts with GORASP2 (via PDZ GRASP-type 1 domain) in respone to ER stress. Interacts with MARCHF2; the interaction leads to CFTR ubiqtuitination and degradation. Interacts with ADGRG2. In terms of processing, N-glycosylated. Post-translationally, phosphorylated; cAMP treatment promotes phosphorylation and activates the channel. Dephosphorylation decreases the ATPase activity (in vitro). Phosphorylation at PKA sites activates the channel. Phosphorylation at PKC sites enhances the response to phosphorylation by PKA. Phosphorylated by AMPK; this inhibits channel activity. Ubiquitinated, leading to its degradation in the lysosome. Deubiquitination by USP10 in early endosomes enhances its endocytic recycling to the cell membrane. Ubiquitinated by RNF185 during ER stress. Ubiquitinated by MARCHF2.

It is found in the apical cell membrane. The protein localises to the early endosome membrane. It localises to the cell membrane. The protein resides in the recycling endosome membrane. Its subcellular location is the endoplasmic reticulum membrane. It is found in the nucleus. The catalysed reaction is ATP + H2O + closed Cl(-) channel = ADP + phosphate + open Cl(-) channel.. It catalyses the reaction chloride(in) = chloride(out). It carries out the reaction hydrogencarbonate(in) = hydrogencarbonate(out). The enzyme catalyses ATP + H2O = ADP + phosphate + H(+). Its function is as follows. Epithelial ion channel that plays an important role in the regulation of epithelial ion and water transport and fluid homeostasis. Mediates the transport of chloride ions across the cell membrane. Possesses an intrinsic ATPase activity and utilizes ATP to gate its channel; the passive flow of anions through the channel is gated by cycles of ATP binding and hydrolysis by the ATP-binding domains. The ion channel is also permeable to HCO(3)(-); selectivity depends on the extracellular chloride concentration. Exerts its function also by modulating the activity of other ion channels and transporters. Contributes to the regulation of the pH and the ion content of the epithelial fluid layer. Modulates the activity of the epithelial sodium channel (ENaC) complex, in part by regulating the cell surface expression of the ENaC complex. May regulate bicarbonate secretion and salvage in epithelial cells by regulating the transporter SLC4A7. Can inhibit the chloride channel activity of ANO1. Plays a role in the chloride and bicarbonate homeostasis during sperm epididymal maturation and capacitation. In Otolemur garnettii (Small-eared galago), this protein is Cystic fibrosis transmembrane conductance regulator.